A 195-amino-acid polypeptide reads, in one-letter code: MLKTNQKNVHAFEIEKQEPEAVMEFLEKNHALLQYFLIIFKYDIEPEVKAILRKHQLLFLETNRALNGRHIKTMSLKEETDHPKPNHSKTEPKTTIYERHIRSGEEIYSANHLIFLGNIHNGAKIISEGCVSVYGVCEGAIVCFGECLILKEVKSAQIVFQNQILSLKEVERLLVNKNIKIITKNDDILDIKEVL.

Belongs to the MinC family. As to quaternary structure, interacts with MinD and FtsZ.

Its function is as follows. Cell division inhibitor that blocks the formation of polar Z ring septums. Rapidly oscillates between the poles of the cell to destabilize FtsZ filaments that have formed before they mature into polar Z rings. Prevents FtsZ polymerization. The chain is Probable septum site-determining protein MinC from Helicobacter pylori (strain G27).